The sequence spans 92 residues: Small ribosomal subunit protein uS19c (92 aa).

The protein belongs to the universal ribosomal protein uS19 family.

It is found in the plastid. Its subcellular location is the chloroplast. Its function is as follows. Protein S19 forms a complex with S13 that binds strongly to the 16S ribosomal RNA. In Dioscorea elephantipes (Elephant's foot yam), this protein is Small ribosomal subunit protein uS19c.